The following is a 498-amino-acid chain: Delta(14)-sterol reductase erg24A (498 aa).

4 consecutive transmembrane segments (helical) span residues 30-50 (LGAF…TFLC), 91-111 (VTVW…FLPG), 136-156 (ILIL…FVVW), and 163-183 (YVQI…FVYA). N-linked (GlcNAc...) asparagine glycosylation occurs at Asn-257. 3 helical membrane passes run 275 to 295 (IVLS…MEPA), 302 to 322 (VIMD…VPFI), and 339 to 359 (LREI…FRGA). NADP(+) contacts are provided by residues Lys-363, Arg-367, Trp-395, and 402 to 403 (NY). Asn-429 carries an N-linked (GlcNAc...) asparagine glycan. The chain crosses the membrane as a helical span at residues 444–464 (VRGWGMIFTYFFLVYFGALLI). Residues Asp-470, 474–478 (CKSKY), and Tyr-485 contribute to the NADP(+) site.

The protein belongs to the ERG4/ERG24 family.

Its subcellular location is the endoplasmic reticulum membrane. It participates in steroid metabolism; ergosterol biosynthesis. Its function is as follows. Delta(14)-sterol reductase; part of the third module of ergosterol biosynthesis pathway that includes the late steps of the pathway. Catalyzes the reduction of the C14=C15 double bond within 4,4,24-trimethyl ergosta-8,14,24(28)-trienolto produce 4,4-dimethylfecosterol. The third module or late pathway involves the ergosterol synthesis itself through consecutive reactions that mainly occur in the endoplasmic reticulum (ER) membrane. Firstly, the squalene synthase erg9 catalyzes the condensation of 2 farnesyl pyrophosphate moieties to form squalene, which is the precursor of all steroids. Squalene synthase is crucial for balancing the incorporation of farnesyl diphosphate (FPP) into sterol and nonsterol isoprene synthesis. Secondly, squalene is converted into lanosterol by the consecutive action of the squalene epoxidase erg1 and the lanosterol synthase erg7. Then, the delta(24)-sterol C-methyltransferase erg6 methylates lanosterol at C-24 to produce eburicol. Eburicol is the substrate of the sterol 14-alpha demethylase encoded by cyp51A and cyp51B, to yield 4,4,24-trimethyl ergosta-8,14,24(28)-trienol. The C-14 reductase erg24 then reduces the C14=C15 double bond which leads to 4,4-dimethylfecosterol. A sequence of further demethylations at C-4, involving the C-4 demethylation complex containing the C-4 methylsterol oxidases erg25A or erg25B, the sterol-4-alpha-carboxylate 3-dehydrogenase erg26 and the 3-keto-steroid reductase erg27, leads to the production of fecosterol via 4-methylfecosterol. The C-8 sterol isomerase erg2 then catalyzes the reaction which results in unsaturation at C-7 in the B ring of sterols and thus converts fecosterol to episterol. The sterol-C5-desaturase erg3B then catalyzes the introduction of a C-5 double bond in the B ring to produce 5-dehydroepisterol. The 2 other sterol-C5-desaturases, erg3A and erg3C, seem to be less important in ergosterol biosynthesis. The C-22 sterol desaturase erg5 further converts 5-dehydroepisterol into ergosta-5,7,22,24(28)-tetraen-3beta-ol by forming the C-22(23) double bond in the sterol side chain. Finally, ergosta-5,7,22,24(28)-tetraen-3beta-ol is substrate of the C-24(28) sterol reductases erg4A and erg4B to produce ergosterol. Possible alternative sterol biosynthetic pathways might exist from fecosterol to ergosterol, depending on the activities of the erg3 isoforms. This chain is Delta(14)-sterol reductase erg24A, found in Aspergillus fumigatus (strain ATCC MYA-4609 / CBS 101355 / FGSC A1100 / Af293) (Neosartorya fumigata).